We begin with the raw amino-acid sequence, 409 residues long: Adenosine receptor A2a (409 aa).

Topologically, residues Met-1 to Ser-4 are extracellular. The helical transmembrane segment at Val-5–Trp-29 threads the bilayer. Over Ile-30–Asn-39 the chain is Cytoplasmic. The chain crosses the membrane as a helical span at residues Tyr-40–Ile-63. Residues Ser-64–Cys-74 are Extracellular-facing. Cystine bridges form between Cys-68/Cys-156, Cys-71/Cys-143, and Cys-74/Cys-163. A helical transmembrane segment spans residues Leu-75–Ile-97. Residues Asp-98–Arg-117 are Cytoplasmic-facing. Residues Ala-118–Trp-140 form a helical membrane-spanning segment. At Asn-141 to Pro-170 the chain is on the extracellular side. Asn-142 and Asn-151 each carry an N-linked (GlcNAc...) asparagine glycan. Residue Glu-166 participates in adenosine binding. A helical transmembrane segment spans residues Met-171–Leu-195. The Cytoplasmic segment spans residues Arg-196–Ser-231. A helical transmembrane segment spans residues Leu-232–Phe-255. Asn-250 contacts adenosine. Cys-256 and Cys-259 are oxidised to a cystine. The Extracellular segment spans residues Cys-256–Pro-263. A helical membrane pass occupies residues Pro-264 to Tyr-287. Adenosine contacts are provided by Ser-274 and His-275. Topologically, residues Arg-288–Ser-409 are cytoplasmic. Disordered regions lie at residues Thr-316–Asn-336 and Gln-369–Ser-409.

The protein belongs to the G-protein coupled receptor 1 family. In terms of assembly, interacts (via cytoplasmic C-terminal domain) with USP4; the interaction is direct. May interact with DRD4. Interacts with NECAB2. Interacts (via cytoplasmic C-terminal domain) with GAS2L2; interaction enhances receptor-mediated adenylyl cyclase activity. In terms of processing, ubiquitinated. Deubiquitinated by USP4; leading to stabilization and expression at the cell surface.

Its subcellular location is the cell membrane. Functionally, receptor for adenosine. The activity of this receptor is mediated by G proteins which activate adenylyl cyclase. The sequence is that of Adenosine receptor A2a (ADORA2A) from Cavia porcellus (Guinea pig).